The primary structure comprises 801 residues: Protein SDA1 homolog (801 aa).

4 disordered regions span residues 1 to 40, 495 to 517, 536 to 647, and 739 to 801; these read MGKVSKSPGKGEKRIGKVGKKNGKSNAPTEGSNSGKASRF, RKDRGKPQEKDDEDEEYNGFARP, GEQG…SKNS, and DYKF…RKPQ. Polar residues predominate over residues 24–40; the sequence is KSNAPTEGSNSGKASRF. Acidic residues-rich tracts occupy residues 544–568 and 583–633; these read DGTDSELDVSDVDTDDVDTDDDADE and NDAE…EASE. Composition is skewed to basic residues over residues 770 to 779 and 787 to 801; these read NKIRGRNRQR and SLRHYLMRQSGRKPQ.

Belongs to the SDA1 family.

It localises to the nucleus. Functionally, required for 60S pre-ribosomal subunits export to the cytoplasm. Required for normal somatic gonad development and for regulation of germline development and proliferation. This Caenorhabditis elegans protein is Protein SDA1 homolog (pro-3).